Reading from the N-terminus, the 429-residue chain is Enolase (429 aa).

Gln162 contributes to the (2R)-2-phosphoglycerate binding site. The Proton donor role is filled by Glu204. 3 residues coordinate Mg(2+): Asp241, Glu283, and Asp310. 4 residues coordinate (2R)-2-phosphoglycerate: Lys335, Arg364, Ser365, and Lys386. The Proton acceptor role is filled by Lys335.

This sequence belongs to the enolase family. It depends on Mg(2+) as a cofactor.

It localises to the cytoplasm. It is found in the secreted. The protein resides in the cell surface. The enzyme catalyses (2R)-2-phosphoglycerate = phosphoenolpyruvate + H2O. The protein operates within carbohydrate degradation; glycolysis; pyruvate from D-glyceraldehyde 3-phosphate: step 4/5. Functionally, catalyzes the reversible conversion of 2-phosphoglycerate (2-PG) into phosphoenolpyruvate (PEP). It is essential for the degradation of carbohydrates via glycolysis. This chain is Enolase, found in Mycobacterium bovis (strain BCG / Pasteur 1173P2).